Consider the following 258-residue polypeptide: UPF0246 protein Bpro_3713 (258 aa).

Belongs to the UPF0246 family.

The chain is UPF0246 protein Bpro_3713 from Polaromonas sp. (strain JS666 / ATCC BAA-500).